A 393-amino-acid chain; its full sequence is Arginine biosynthesis bifunctional protein ArgJ (393 aa).

Substrate-binding residues include Thr-142, Lys-168, Thr-179, Glu-265, Asn-388, and Thr-393. Thr-179 (nucleophile) is an active-site residue.

The protein belongs to the ArgJ family. In terms of assembly, heterotetramer of two alpha and two beta chains.

Its subcellular location is the cytoplasm. The catalysed reaction is N(2)-acetyl-L-ornithine + L-glutamate = N-acetyl-L-glutamate + L-ornithine. The enzyme catalyses L-glutamate + acetyl-CoA = N-acetyl-L-glutamate + CoA + H(+). It functions in the pathway amino-acid biosynthesis; L-arginine biosynthesis; L-ornithine and N-acetyl-L-glutamate from L-glutamate and N(2)-acetyl-L-ornithine (cyclic): step 1/1. The protein operates within amino-acid biosynthesis; L-arginine biosynthesis; N(2)-acetyl-L-ornithine from L-glutamate: step 1/4. Its function is as follows. Catalyzes two activities which are involved in the cyclic version of arginine biosynthesis: the synthesis of N-acetylglutamate from glutamate and acetyl-CoA as the acetyl donor, and of ornithine by transacetylation between N(2)-acetylornithine and glutamate. This chain is Arginine biosynthesis bifunctional protein ArgJ, found in Geobacter sulfurreducens (strain ATCC 51573 / DSM 12127 / PCA).